The following is a 315-amino-acid chain: Ribosomal RNA small subunit methyltransferase H (315 aa).

S-adenosyl-L-methionine-binding positions include 37–39 (GGH), D57, F83, D105, and Q112.

It belongs to the methyltransferase superfamily. RsmH family.

It localises to the cytoplasm. The catalysed reaction is cytidine(1402) in 16S rRNA + S-adenosyl-L-methionine = N(4)-methylcytidine(1402) in 16S rRNA + S-adenosyl-L-homocysteine + H(+). Specifically methylates the N4 position of cytidine in position 1402 (C1402) of 16S rRNA. The sequence is that of Ribosomal RNA small subunit methyltransferase H from Pseudomonas putida (strain W619).